A 564-amino-acid chain; its full sequence is MAAPKNSIPSLAECQCGICMEILVEPVTLPCNHTLCNPCFQSTVEKANLCCPFCRRRVSSWTRYHTRRNSLVNTDLWEIIQKHYAKECKLRISGQESKEIVDEYQPVRLLSKPGELRREYEEEISKVEAERQASKEEENKASEEYIQRLLAEEEEEEKRRTERRRSEMEEQLRGDEELARRLSTSINSNYERNILASPLSSRKSDPVTNKSQKKNTNKQKNFGDIQRYLSPKSKPGTAWACKTEHGEDMCKSKETDSSDTKSPVLQDTDVEESMPTHSPQTCPETQGQGPEPLTEMPVPWLCARNAEQCLEGKAEAVSTNPDDSCIVNDGGPRAIVSNSKEAAVKPPTKIENEEYSVSGVTQLTGGNGVPTESRVYDLLVGKEISERENQESVFEEVMDPCFSAKRRKIFITSSLDQEETEVNFTQKLIDLEHMLFERHKQEEQDRLLALQLQKEADKEKMVPNRQKGSPDQYQLRTSSPPDGLLNGQRKNVKDRNSPKQTADRSKSQRSRKGEYWETFESTWKGSVNGTKMPTPRKDSCNVSKRACPLQHRSAQKSILQMFQR.

The RING-type zinc-finger motif lies at 16-55; the sequence is CGICMEILVEPVTLPCNHTLCNPCFQSTVEKANLCCPFCR. Residue Ser-70 is modified to Phosphoserine. The short motif at 110-128 is the LR motif 1 element; it reads LSKPGELRREYEEEISKVE. Ser-134 carries the phosphoserine modification. The UMI motif signature appears at 143-151; it reads EEYIQRLLA. Disordered regions lie at residues 149–179 and 193–291; these read LLAEEEEEEKRRTERRRSEMEEQLRGDEELA and NILA…QGPE. Over residues 157–179 the composition is skewed to basic and acidic residues; that stretch reads EKRRTERRRSEMEEQLRGDEELA. The short motif at 168–191 is the MIU motif 1 element; that stretch reads MEEQLRGDEELARRLSTSINSNYE. A Phosphoserine modification is found at Ser-197. Residue Lys-210 forms a Glycyl lysine isopeptide (Lys-Gly) (interchain with G-Cter in SUMO2) linkage. A compositionally biased stretch (basic and acidic residues) spans 242–259; that stretch reads KTEHGEDMCKSKETDSSD. Residues 275–288 are compositionally biased toward polar residues; that stretch reads PTHSPQTCPETQGQ. Thr-348 and Thr-361 each carry phosphothreonine. Ser-413 and Ser-414 each carry phosphoserine. The short motif at 438-461 is the MIU motif 2 element; it reads RHKQEEQDRLLALQLQKEADKEKM. The disordered stretch occupies residues 455–564; the sequence is EADKEKMVPN…QKSILQMFQR (110 aa). Residues 465-476 carry the LR motif 2 motif; sequence RQKGSPDQYQLR. Positions 466 to 480 are enriched in polar residues; the sequence is QKGSPDQYQLRTSSP. Ser-469 bears the Phosphoserine mark. Residues 491 to 515 show a composition bias toward basic and acidic residues; the sequence is NVKDRNSPKQTADRSKSQRSRKGEY. Composition is skewed to polar residues over residues 519-531 and 555-564; these read FESTWKGSVNGTK and QKSILQMFQR. Lys-524 participates in a covalent cross-link: Glycyl lysine isopeptide (Lys-Gly) (interchain with G-Cter in SUMO2).

The protein belongs to the RNF168 family. Monomer. Interacts with UBE2N/UBC13. Sumoylated with SUMO1 by PIAS4 in response to double-strand breaks (DSBs). In terms of processing, ubiquitinated.

Its subcellular location is the nucleus. It catalyses the reaction S-ubiquitinyl-[E2 ubiquitin-conjugating enzyme]-L-cysteine + [acceptor protein]-L-lysine = [E2 ubiquitin-conjugating enzyme]-L-cysteine + N(6)-ubiquitinyl-[acceptor protein]-L-lysine.. The protein operates within protein modification; protein ubiquitination. In terms of biological role, E3 ubiquitin-protein ligase required for accumulation of repair proteins to sites of DNA damage. Acts with UBE2N/UBC13 to amplify the RNF8-dependent histone ubiquitination. Recruited to sites of DNA damage at double-strand breaks (DSBs) by binding to ubiquitinated histone H2A and H2AX and amplifies the RNF8-dependent H2A ubiquitination, promoting the formation of 'Lys-63'-linked ubiquitin conjugates. This leads to concentrate ubiquitinated histones H2A and H2AX at DNA lesions to the threshold required for recruitment of TP53BP1 and BRCA1. Also recruited at DNA interstrand cross-links (ICLs) sites and promotes accumulation of 'Lys-63'-linked ubiquitination of histones H2A and H2AX, leading to recruitment of FAAP20 and Fanconi anemia (FA) complex, followed by interstrand cross-link repair. H2A ubiquitination also mediates the ATM-dependent transcriptional silencing at regions flanking DSBs in cis, a mechanism to avoid collision between transcription and repair intermediates. Also involved in class switch recombination in immune system, via its role in regulation of DSBs repair. Following DNA damage, promotes the ubiquitination and degradation of JMJD2A/KDM4A in collaboration with RNF8, leading to unmask H4K20me2 mark and promote the recruitment of TP53BP1 at DNA damage sites. Not able to initiate 'Lys-63'-linked ubiquitination in vitro; possibly due to partial occlusion of the UBE2N/UBC13-binding region. Catalyzes monoubiquitination of 'Lys-13' and 'Lys-15' of nucleosomal histone H2A (H2AK13Ub and H2AK15Ub, respectively). This is E3 ubiquitin-protein ligase RNF168 from Rattus norvegicus (Rat).